The sequence spans 207 residues: Segregation and condensation protein B (207 aa).

Belongs to the ScpB family. In terms of assembly, homodimer. Homodimerization may be required to stabilize the binding of ScpA to the Smc head domains. Component of a cohesin-like complex composed of ScpA, ScpB and the Smc homodimer, in which ScpA and ScpB bind to the head domain of Smc. The presence of the three proteins is required for the association of the complex with DNA.

The protein localises to the cytoplasm. Participates in chromosomal partition during cell division. May act via the formation of a condensin-like complex containing Smc and ScpA that pull DNA away from mid-cell into both cell halves. This chain is Segregation and condensation protein B, found in Mycoplasma genitalium (strain ATCC 33530 / DSM 19775 / NCTC 10195 / G37) (Mycoplasmoides genitalium).